Here is a 437-residue protein sequence, read N- to C-terminus: Ribulose bisphosphate carboxylase/oxygenase activase, chloroplastic (437 aa).

Polar residues predominate over residues 1–10; that stretch reads MATAVSTIGS. Residues 1–26 form a disordered region; the sequence is MATAVSTIGSVNRAPPNLNGSSSSAS. 165–172 serves as a coordination point for ATP; sequence GGKGQGKS.

Belongs to the RuBisCO activase family.

It localises to the plastid. It is found in the chloroplast stroma. Its function is as follows. Activation of RuBisCO (ribulose-1,5-bisphosphate carboxylase/oxygenase; EC 4.1.1.39) involves the ATP-dependent carboxylation of the epsilon-amino group of lysine leading to a carbamate structure. The chain is Ribulose bisphosphate carboxylase/oxygenase activase, chloroplastic (RCA) from Malus domestica (Apple).